Here is a 417-residue protein sequence, read N- to C-terminus: Cobalamin binding intrinsic factor (417 aa).

Residues 1–18 (MAWLSFYLLNVLWAVAGT) form the signal peptide. 3 disulfides stabilise this stretch: cysteine 26–cysteine 246, cysteine 103–cysteine 288, and cysteine 143–cysteine 182. Residue aspartate 171 coordinates cob(II)alamin. Serine 191 bears the Phosphoserine mark. Asparagine 209 carries N-linked (GlcNAc...) asparagine glycosylation. Residues aspartate 222 and glutamine 270 each coordinate cob(II)alamin. N-linked (GlcNAc...) asparagine glycosylation is found at asparagine 311 and asparagine 330. Residues 365–370 (SWGLIV) and 386–395 (WEFLSGKTPL) each bind cob(II)alamin. An N-linked (GlcNAc...) asparagine glycan is attached at asparagine 413.

It belongs to the eukaryotic cobalamin transport proteins family. As to quaternary structure, interacts with CUBN (via CUB domains). In terms of processing, the N-terminus is blocked. Gastric mucosa.

Its subcellular location is the secreted. Promotes absorption of the essential vitamin cobalamin (Cbl) in the ileum. After interaction with CUBN, the CBLIF-cobalamin complex is internalized via receptor-mediated endocytosis. In Rattus norvegicus (Rat), this protein is Cobalamin binding intrinsic factor.